Here is a 946-residue protein sequence, read N- to C-terminus: Protein translocase subunit SecA (946 aa).

Residues Gln-89, 107–111, and Asp-508 contribute to the ATP site; that span reads GEGKT. Positions 534–569 are disordered; sequence PEDSHKPPVPLQRRKDSSVGFGKEENNSKDKKVNHS. Over residues 546 to 569 the composition is skewed to basic and acidic residues; the sequence is RRKDSSVGFGKEENNSKDKKVNHS.

This sequence belongs to the SecA family. Monomer and homodimer. Part of the essential Sec protein translocation apparatus which comprises SecA, SecYEG and auxiliary proteins SecDF. Other proteins may also be involved.

The protein localises to the cell inner membrane. It is found in the cellular thylakoid membrane. It localises to the cytoplasm. The enzyme catalyses ATP + H2O + cellular proteinSide 1 = ADP + phosphate + cellular proteinSide 2.. Its function is as follows. Part of the Sec protein translocase complex. Interacts with the SecYEG preprotein conducting channel. Has a central role in coupling the hydrolysis of ATP to the transfer of proteins into and across the cell membrane, serving as an ATP-driven molecular motor driving the stepwise translocation of polypeptide chains across the membrane. Functionally, probably participates in protein translocation into and across both the cytoplasmic and thylakoid membranes in cyanobacterial cells. This is Protein translocase subunit SecA from Prochlorococcus marinus (strain SARG / CCMP1375 / SS120).